Reading from the N-terminus, the 166-residue chain is NAD(P)H-quinone oxidoreductase subunit I, chloroplastic (166 aa).

4Fe-4S ferredoxin-type domains are found at residues 55-84 and 95-124; these read GRIH…VDWK and LNYS…MTEE. The [4Fe-4S] cluster site is built by Cys-64, Cys-67, Cys-70, Cys-74, Cys-104, Cys-107, Cys-110, and Cys-114.

The protein belongs to the complex I 23 kDa subunit family. NDH is composed of at least 16 different subunits, 5 of which are encoded in the nucleus. [4Fe-4S] cluster serves as cofactor.

It localises to the plastid. The protein localises to the chloroplast thylakoid membrane. The catalysed reaction is a plastoquinone + NADH + (n+1) H(+)(in) = a plastoquinol + NAD(+) + n H(+)(out). It catalyses the reaction a plastoquinone + NADPH + (n+1) H(+)(in) = a plastoquinol + NADP(+) + n H(+)(out). In terms of biological role, NDH shuttles electrons from NAD(P)H:plastoquinone, via FMN and iron-sulfur (Fe-S) centers, to quinones in the photosynthetic chain and possibly in a chloroplast respiratory chain. The immediate electron acceptor for the enzyme in this species is believed to be plastoquinone. Couples the redox reaction to proton translocation, and thus conserves the redox energy in a proton gradient. The chain is NAD(P)H-quinone oxidoreductase subunit I, chloroplastic from Encelia californica (Bush sunflower).